The sequence spans 461 residues: tRNA modification GTPase MnmE (461 aa).

(6S)-5-formyl-5,6,7,8-tetrahydrofolate-binding residues include Arg20, Glu85, and Lys124. Positions 221–383 (GIPVAIIGET…LQQLLTEVSS (163 aa)) constitute a TrmE-type G domain. Asn231 lines the K(+) pocket. GTP-binding positions include 231–236 (NAGKST), 250–256 (SDIHGTT), and 275–278 (DTAG). Position 235 (Ser235) interacts with Mg(2+). 3 residues coordinate K(+): Ser250, Ile252, and Thr255. Thr256 contributes to the Mg(2+) binding site. Lys461 contributes to the (6S)-5-formyl-5,6,7,8-tetrahydrofolate binding site.

Belongs to the TRAFAC class TrmE-Era-EngA-EngB-Septin-like GTPase superfamily. TrmE GTPase family. In terms of assembly, homodimer. Heterotetramer of two MnmE and two MnmG subunits. Requires K(+) as cofactor.

It localises to the cytoplasm. Its function is as follows. Exhibits a very high intrinsic GTPase hydrolysis rate. Involved in the addition of a carboxymethylaminomethyl (cmnm) group at the wobble position (U34) of certain tRNAs, forming tRNA-cmnm(5)s(2)U34. This Parabacteroides distasonis (strain ATCC 8503 / DSM 20701 / CIP 104284 / JCM 5825 / NCTC 11152) protein is tRNA modification GTPase MnmE.